We begin with the raw amino-acid sequence, 136 residues long: UPF0299 membrane protein PM0880 (136 aa).

Helical transmembrane passes span 5–25, 29–49, 67–87, and 92–112; these read IVDL…GEWI, LNIG…GLTF, YMAL…DVLF, and VLLL…GLLS.

Belongs to the UPF0299 family.

It is found in the cell inner membrane. This chain is UPF0299 membrane protein PM0880, found in Pasteurella multocida (strain Pm70).